The primary structure comprises 214 residues: Refilin-B (214 aa).

The tract at residues 1–56 (MVGRLSLQDVPELVDAKKKGDGVLDSPDSGLPPSPSPSHWGLAAGGGGGERAAAPG) is disordered. Residues Ser-6 and Ser-26 each carry the phosphoserine modification.

Belongs to the Refilin family. In terms of assembly, interacts with FLNA and FLNB.

The protein resides in the cytoplasm. Its subcellular location is the cytoskeleton. Its function is as follows. Involved in the regulation of the perinuclear actin network and nuclear shape through interaction with filamins. Plays an essential role in the formation of cartilaginous skeletal elements. The polypeptide is Refilin-B (Homo sapiens (Human)).